Consider the following 142-residue polypeptide: Galactose-6-phosphate isomerase subunit LacA 2 (142 aa).

Belongs to the LacAB/RpiB family. As to quaternary structure, heteromultimeric protein consisting of LacA and LacB.

It catalyses the reaction aldehydo-D-galactose 6-phosphate = keto-D-tagatose 6-phosphate. It functions in the pathway carbohydrate metabolism; D-galactose 6-phosphate degradation; D-tagatose 6-phosphate from D-galactose 6-phosphate: step 1/1. This Streptococcus pyogenes serotype M1 protein is Galactose-6-phosphate isomerase subunit LacA 2.